Consider the following 282-residue polypeptide: Protein DOG1-like 3 (282 aa).

One can recognise a DOG1 domain in the interval 11–254; that stretch reads EQLQKGCYYE…HEWGRVREEQ (244 aa).

In Arabidopsis thaliana (Mouse-ear cress), this protein is Protein DOG1-like 3.